The sequence spans 550 residues: Parathyroid hormone 2 receptor (550 aa).

The first 24 residues, 1–24, serve as a signal peptide directing secretion; sequence MAGLGASLHVWGWLMLGSCLLARA. The Extracellular portion of the chain corresponds to 27–145; it reads DSDGTITIEE…GKQEFFERLY (119 aa). 4 N-linked (GlcNAc...) asparagine glycosylation sites follow: asparagine 51, asparagine 106, asparagine 116, and asparagine 121. The helical transmembrane segment at 146 to 169 threads the bilayer; sequence VMYTVGYSISFGSLAVAILIIGYF. The Cytoplasmic segment spans residues 170 to 176; the sequence is RRLHCTR. The chain crosses the membrane as a helical span at residues 177–196; that stretch reads NYIHMHLFVSFMLRATSIFV. Residues 197–237 are Extracellular-facing; sequence KDRVVHAHIGVKELESLIMQDDPQNSIEATSVDKSQYIGCK. A helical membrane pass occupies residues 238-260; the sequence is IAVVMFIYFLATNYYWILVEGLY. Residues 261–275 are Cytoplasmic-facing; the sequence is LHNLIFVAFFSDTKY. A helical transmembrane segment spans residues 276-297; the sequence is LWGFILIGWGFPAAFVAAWAVA. The Extracellular segment spans residues 298–316; it reads RATLADARCWELSAGDIKW. Residues 317–337 form a helical membrane-spanning segment; that stretch reads IYQAPILAAIGLNFILFLNTV. Residues 338-364 lie on the Cytoplasmic side of the membrane; it reads RVLATKIWETNAVGHDTRKQYRKLAKS. A helical membrane pass occupies residues 365–383; the sequence is TLVLVLVFGVHYIVFVCLP. Residues 384–394 are Extracellular-facing; it reads HSFTGLGWEIR. The helical transmembrane segment at 395–417 threads the bilayer; the sequence is MHCELFFNSFQGFFVSIIYCYCN. Over 418 to 550 the chain is Cytoplasmic; the sequence is GEVQAEVKKM…GCQGETEDVL (133 aa). The segment covering 511 to 531 has biased composition (basic and acidic residues); it reads EETKEDSGRQGDDILMEKPSR. A disordered region spans residues 511 to 550; sequence EETKEDSGRQGDDILMEKPSRPMESNPDTEGCQGETEDVL.

The protein belongs to the G-protein coupled receptor 2 family. As to quaternary structure, binds to TIPF39/TIP39. As to expression, expressed abundantly in brain and pancreas. Also expressed in the testis.

The protein resides in the cell membrane. Its function is as follows. This is a specific receptor for parathyroid hormone. The activity of this receptor is mediated by G proteins which activate adenylyl cyclase. PTH2R may be responsible for PTH effects in a number of physiological systems. It may play a significant role in pancreatic function. PTH2R presence in neurons indicates that it may function as a neurotransmitter receptor. The protein is Parathyroid hormone 2 receptor (PTH2R) of Homo sapiens (Human).